A 517-amino-acid chain; its full sequence is Diacylglycerol O-acyltransferase 1C (517 aa).

A disordered region spans residues 1 to 82 (MAISDVPAAA…NVGAAANDAG (82 aa)). The span at 8-17 (AAAGTTATTT) shows a compositional bias: low complexity. Positions 53–64 (ITDDDNIKDHKP) are enriched in basic and acidic residues. Over residues 71-81 (DDNVGAAANDA) the composition is skewed to low complexity. Transmembrane regions (helical) follow at residues 121-141 (HAGL…RLII), 165-185 (WPLF…FVVE), 197-217 (VVVL…VLVI), 222-242 (SAFV…LKLV), 272-292 (YPYT…TLCY), 305-325 (GWVF…GFII), and 361-381 (VWLC…AELV). The FYXDWWN motif signature appears at 388–394 (FYKDWWN). 3 helical membrane passes run 429 to 449 (GAAS…CIAV), 451 to 471 (CHMF…LVLI), and 484 to 504 (VGNM…SVLL). H443 is a catalytic residue.

This sequence belongs to the membrane-bound acyltransferase family. Sterol o-acyltransferase subfamily.

It localises to the endoplasmic reticulum membrane. It carries out the reaction an acyl-CoA + a 1,2-diacyl-sn-glycerol = a triacyl-sn-glycerol + CoA. It participates in glycerolipid metabolism; triacylglycerol biosynthesis. Functionally, involved in triacylglycerol (TAG) synthesis. Catalyzes the acylation of the sn-3 hydroxy group of sn-1,2-diacylglycerol using acyl-CoA. The protein is Diacylglycerol O-acyltransferase 1C of Glycine max (Soybean).